Reading from the N-terminus, the 156-residue chain is MSRRHSAEKREIIPDAKYGDVVLTKFMNSIMYEGKKSTAERIVYGAFDLVESRARANPIEVFRAALDNVAPAIEVRSRRVGGATYQVPVEVRTERRQALAIRWLIQAARGRNDRTMVERLSAELLDAANNRGNAVKKREDTHRMAEANRAFSHYRW.

This sequence belongs to the universal ribosomal protein uS7 family. As to quaternary structure, part of the 30S ribosomal subunit. Contacts proteins S9 and S11.

Its function is as follows. One of the primary rRNA binding proteins, it binds directly to 16S rRNA where it nucleates assembly of the head domain of the 30S subunit. Is located at the subunit interface close to the decoding center, probably blocks exit of the E-site tRNA. The polypeptide is Small ribosomal subunit protein uS7 (Methylorubrum populi (strain ATCC BAA-705 / NCIMB 13946 / BJ001) (Methylobacterium populi)).